The chain runs to 368 residues: Peptide chain release factor 2 (368 aa).

Residue glutamine 250 is modified to N5-methylglutamine.

Belongs to the prokaryotic/mitochondrial release factor family. Methylated by PrmC. Methylation increases the termination efficiency of RF2.

The protein resides in the cytoplasm. In terms of biological role, peptide chain release factor 2 directs the termination of translation in response to the peptide chain termination codons UGA and UAA. In Mycolicibacterium vanbaalenii (strain DSM 7251 / JCM 13017 / BCRC 16820 / KCTC 9966 / NRRL B-24157 / PYR-1) (Mycobacterium vanbaalenii), this protein is Peptide chain release factor 2.